A 467-amino-acid polypeptide reads, in one-letter code: Cytochrome P450 76A1 (467 aa).

Cys410 is a binding site for heme.

This sequence belongs to the cytochrome P450 family. Heme is required as a cofactor.

The sequence is that of Cytochrome P450 76A1 (CYP76A1) from Solanum melongena (Eggplant).